Reading from the N-terminus, the 63-residue chain is Cecropin-B (63 aa).

Residues 1 to 22 (MNFNKIFVFVALILAISLGNTE) form the signal peptide. Arg62 carries the post-translational modification Arginine amide.

This sequence belongs to the cecropin family.

Its subcellular location is the secreted. Cecropins have lytic and antibacterial activity against several Gram-positive and Gram-negative bacteria. The polypeptide is Cecropin-B (CecB) (Drosophila simulans (Fruit fly)).